The primary structure comprises 138 residues: Ribosome maturation factor RimP (138 aa).

This sequence belongs to the RimP family.

Its subcellular location is the cytoplasm. Functionally, required for maturation of 30S ribosomal subunits. The protein is Ribosome maturation factor RimP of Campylobacter concisus (strain 13826).